Consider the following 305-residue polypeptide: 2-oxoacid:ferredoxin oxidoreductase subunit beta (305 aa).

Residues Cys12, Cys15, and Cys46 each contribute to the [4Fe-4S] cluster site. Residues 44–47 (IGCS) and His65 each bind thiamine diphosphate. Asp90 is a Mg(2+) binding site. 91-92 (GD) contributes to the thiamine diphosphate binding site. Positions 118 and 120 each coordinate Mg(2+). A thiamine diphosphate-binding site is contributed by 122 to 123 (GL). Cys197 lines the [4Fe-4S] cluster pocket.

Heterodimer composed of an alpha and a beta subunit. The cofactor is [4Fe-4S] cluster. It depends on thiamine diphosphate as a cofactor. Mg(2+) serves as cofactor.

It catalyses the reaction a 2-oxocarboxylate + 2 oxidized [2Fe-2S]-[ferredoxin] + CoA = an acyl-CoA + 2 reduced [2Fe-2S]-[ferredoxin] + CO2 + H(+). Its function is as follows. Catalyzes the coenzyme A-dependent oxidative decarboxylation of different 2-oxoacids such as 2-oxoglutarate, pyruvate and 2-oxobutyrate to form their CoA derivatives. The protein is 2-oxoacid:ferredoxin oxidoreductase subunit beta of Saccharolobus solfataricus (Sulfolobus solfataricus).